Consider the following 208-residue polypeptide: Peptide deformylase 3 (208 aa).

Fe cation is bound by residues cysteine 120 and histidine 162. Glutamate 163 is a catalytic residue. Residue histidine 166 coordinates Fe cation.

It belongs to the polypeptide deformylase family. The cofactor is Fe(2+).

The catalysed reaction is N-terminal N-formyl-L-methionyl-[peptide] + H2O = N-terminal L-methionyl-[peptide] + formate. Functionally, removes the formyl group from the N-terminal Met of newly synthesized proteins. Requires at least a dipeptide for an efficient rate of reaction. N-terminal L-methionine is a prerequisite for activity but the enzyme has broad specificity at other positions. This Streptomyces coelicolor (strain ATCC BAA-471 / A3(2) / M145) protein is Peptide deformylase 3.